The chain runs to 460 residues: Hydroxymethylglutaryl-CoA synthase erg13B (460 aa).

Glu-86 functions as the Proton donor/acceptor in the catalytic mechanism. The Acyl-thioester intermediate role is filled by Cys-120. (3S)-3-hydroxy-3-methylglutaryl-CoA contacts are provided by Cys-120, Thr-162, Ser-212, His-263, Lys-272, Asn-340, and Ser-374. Catalysis depends on His-263, which acts as the Proton donor/acceptor.

It belongs to the thiolase-like superfamily. HMG-CoA synthase family.

The catalysed reaction is acetoacetyl-CoA + acetyl-CoA + H2O = (3S)-3-hydroxy-3-methylglutaryl-CoA + CoA + H(+). It functions in the pathway metabolic intermediate biosynthesis; (R)-mevalonate biosynthesis; (R)-mevalonate from acetyl-CoA: step 2/3. In terms of biological role, hydroxymethylglutaryl-CoA synthase; part of the first module of ergosterol biosynthesis pathway that includes the early steps of the pathway, conserved across all eukaryotes, and which results in the formation of mevalonate from acetyl-coenzyme A (acetyl-CoA). Erg13A and erg13B condense acetyl-CoA with acetoacetyl-CoA to form hydroxymethylglutaryl-CoA (HMG-CoA). The first module starts with the action of the cytosolic acetyl-CoA acetyltransferase erg10B that catalyzes the formation of acetoacetyl-CoA. The hydroxymethylglutaryl-CoA synthases erg13A and erg13B then condense acetyl-CoA with acetoacetyl-CoA to form HMG-CoA. The rate-limiting step of the early module is the reduction to mevalonate by the 3-hydroxy-3-methylglutaryl-coenzyme A (HMG-CoA) reductases hmg1 and hmg2. Mevalonate is also a precursor for the extracellular siderophore triacetylfusarinine C (TAFC). The chain is Hydroxymethylglutaryl-CoA synthase erg13B from Aspergillus fumigatus (strain ATCC MYA-4609 / CBS 101355 / FGSC A1100 / Af293) (Neosartorya fumigata).